The sequence spans 317 residues: Olfactory receptor 2T27 (317 aa).

The Extracellular portion of the chain corresponds to 1 to 22 (MEQSNYSVYADFILLGLFSNAR). Asparagine 5 carries N-linked (GlcNAc...) asparagine glycosylation. A helical transmembrane segment spans residues 23-43 (FPWLLFALILLVFLTSIASNV). Over 44-60 (VKIILIHIDSRLHTPMY) the chain is Cytoplasmic. The helical transmembrane segment at 61 to 83 (FLLSQLSLRDILYISTIVPKMLV) threads the bilayer. Residues 84 to 97 (DQVMSQRAISFAGC) are Extracellular-facing. Cysteine 97 and cysteine 189 are joined by a disulfide. The helical transmembrane segment at 98–118 (TAQHFLYLTLAGAEFFLLGLM) threads the bilayer. At 119–139 (SYDRYVAICNPLHYPVLMSRK) the chain is on the cytoplasmic side. Residues 140-160 (ICWLIVAAAWLGGSIDGFLLT) form a helical membrane-spanning segment. At 161-197 (PVTMQFPFCASREINHFFCEVPALLKLSCTDTSAYET) the chain is on the extracellular side. The helical transmembrane segment at 198-218 (AMYVCCIMMLLIPFSVISGSY) threads the bilayer. Residues 219 to 244 (TRILITVYRMSEAEGRGKAVATCSSH) lie on the Cytoplasmic side of the membrane. Residues 245-265 (MVVVSLFYGAAMYTYVLPHSY) traverse the membrane as a helical segment. The Extracellular segment spans residues 266 to 271 (HTPEQD). A helical transmembrane segment spans residues 272-292 (KAVSAFYTILTPMLNPLIYSL). Over 293–317 (RNKDVTGALQKVVGRCVSSGKVTTF) the chain is Cytoplasmic.

Belongs to the G-protein coupled receptor 1 family.

It is found in the cell membrane. In terms of biological role, odorant receptor. In Homo sapiens (Human), this protein is Olfactory receptor 2T27 (OR2T27).